The primary structure comprises 184 residues: Protein PLANT CADMIUM RESISTANCE 4 (184 aa).

A compositionally biased stretch (polar residues) spans methionine 1–glutamate 10. The segment at methionine 1–threonine 21 is disordered. Residues glycine 96–phenylalanine 116 form a helical membrane-spanning segment.

It belongs to the cornifelin family.

Its subcellular location is the membrane. Its function is as follows. May be involved in heavy metals transport. The polypeptide is Protein PLANT CADMIUM RESISTANCE 4 (PCR4) (Arabidopsis thaliana (Mouse-ear cress)).